The chain runs to 810 residues: DNA-binding protein REB1 (810 aa).

Composition is skewed to basic and acidic residues over residues 1–10 and 29–44; these read MPSGHNDKNA and HQNH…LENK. Disordered regions lie at residues 1-80, 114-161, 180-243, 294-313, and 346-365; these read MPSG…ENIS, NQQD…GVDD, NNNN…TNND, HGLN…LSNS, and QDTQ…AGSV. Composition is skewed to low complexity over residues 51-64 and 124-135; these read IVES…NNND and NNNTDNGNDSNN. Residues 149–161 show a composition bias toward basic and acidic residues; sequence DKNKKDAGVGVDD. Residues 180 to 191 are compositionally biased toward low complexity; sequence NNNNNNSIANDS. Residues 198–208 are compositionally biased toward basic and acidic residues; it reads HDNGNNHENSQ. Positions 346 to 355 are enriched in polar residues; sequence QDTQPHQQKS. S355 bears the Phosphoserine mark. The 54-residue stretch at 470–523 folds into the HTH myb-type domain; sequence HIFEQRGKWTAEEEQELAKLCAEKEGQWAEIGKTLGRMPEDCRDRWRNYVKCGT. Residues 497–519 constitute a DNA-binding region (H-T-H motif); it reads WAEIGKTLGRMPEDCRDRWRNYV. The segment at 572 to 667 is disordered; the sequence is QNDHRNNDED…STHSKSLSNT (96 aa). Residues 586–606 are compositionally biased toward low complexity; sequence ASAAAAAAAAIQEQQQLLQQK. The segment covering 627 to 636 has biased composition (basic and acidic residues); that stretch reads DNKDEDKPHD. Polar residues predominate over residues 643–667; that stretch reads DDNSQNSMVPAPSATSTHSKSLSNT. Residues 692-717 form the Myb-like domain; that stretch reads NWTIVSERMGGTRSRIQCRYKWNKLV. Residue K807 forms a Glycyl lysine isopeptide (Lys-Gly) (interchain with G-Cter in SUMO) linkage.

It is found in the nucleus. Its function is as follows. DNA-binding protein that recognizes sites within both the enhancer and the promoter of rRNA transcription, as well as upstream of many genes transcribed by RNA polymerase II. It is essential for cell growth. May stimulate or inhibit transcription. Specifically recognizes the sequence 5'-CCGGGTA-3' or 5'-CGGGTRR-3' (where R is any purine). A member of the general regulatory factors (GRFs) which act as genome partitioners. Acts as a chromatin insulator which are known as STARs (Subtelomeric anti-silencing region). STARs prevent negative or positive transcription influence by extending across chromatin to a promoter. In Saccharomyces cerevisiae (strain ATCC 204508 / S288c) (Baker's yeast), this protein is DNA-binding protein REB1 (REB1).